Reading from the N-terminus, the 203-residue chain is Endoplasmic reticulum transmembrane protein 3 (203 aa).

The Lumenal portion of the chain corresponds to 1–6; that stretch reads MSLYYT. The helical transmembrane segment at 7-27 threads the bilayer; it reads LVFAILVVEIFMFSILALPIP. The Cytoplasmic segment spans residues 28 to 45; the sequence is SRYRRPLTLLLLKPFKSS. The chain crosses the membrane as a helical span at residues 46–66; that stretch reads TVQVAIKCVLGFILLLFIDCI. Residues 67-110 lie on the Lumenal side of the membrane; that stretch reads NRVYSIDKELQLSSASQNNGAIIAQDRIEVLSRKFFAQRNMYLT. The helical transmembrane segment at 111 to 131 threads the bilayer; sequence GITLFLTFVVVRTFGLVIELL. The Cytoplasmic segment spans residues 132-203; the sequence is TMKDIYRASP…KSESLQEEIN (72 aa). The disordered stretch occupies residues 142–171; that stretch reads PVASSDVKKNDSVTAEAAAQSGASKDDHGD.

This sequence belongs to the BCAP29/BCAP31 family.

The protein resides in the endoplasmic reticulum membrane. Its function is as follows. May play a role in anterograde transport of membrane proteins from the endoplasmic reticulum to the Golgi. May be involved in invertase secretion. The sequence is that of Endoplasmic reticulum transmembrane protein 3 (YET3) from Saccharomyces cerevisiae (strain ATCC 204508 / S288c) (Baker's yeast).